We begin with the raw amino-acid sequence, 289 residues long: S-methyl-5'-thioadenosine phosphorylase (289 aa).

Phosphate is bound by residues Ser-24, Arg-66–His-67, and Thr-99–Ala-100. Substrate is bound at residue Met-202. Thr-203 is a phosphate binding site. Residue Asp-226–Asp-228 participates in substrate binding.

The protein belongs to the PNP/MTAP phosphorylase family. MTAP subfamily. As to quaternary structure, homotrimer.

It localises to the cytoplasm. The protein resides in the nucleus. The catalysed reaction is S-methyl-5'-thioadenosine + phosphate = 5-(methylsulfanyl)-alpha-D-ribose 1-phosphate + adenine. It functions in the pathway amino-acid biosynthesis; L-methionine biosynthesis via salvage pathway; S-methyl-5-thio-alpha-D-ribose 1-phosphate from S-methyl-5'-thioadenosine (phosphorylase route): step 1/1. Catalyzes the reversible phosphorylation of S-methyl-5'-thioadenosine (MTA) to adenine and 5-methylthioribose-1-phosphate. Involved in the breakdown of MTA, a major by-product of polyamine biosynthesis. Responsible for the first step in the methionine salvage pathway after MTA has been generated from S-adenosylmethionine. Has broad substrate specificity with 6-aminopurine nucleosides as preferred substrates. This chain is S-methyl-5'-thioadenosine phosphorylase, found in Drosophila pseudoobscura pseudoobscura (Fruit fly).